A 289-amino-acid polypeptide reads, in one-letter code: Ribosomal RNA small subunit methyltransferase A (289 aa).

S-adenosyl-L-methionine contacts are provided by N33, V35, G60, E81, D111, and N130.

It belongs to the class I-like SAM-binding methyltransferase superfamily. rRNA adenine N(6)-methyltransferase family. RsmA subfamily.

The protein localises to the cytoplasm. It catalyses the reaction adenosine(1518)/adenosine(1519) in 16S rRNA + 4 S-adenosyl-L-methionine = N(6)-dimethyladenosine(1518)/N(6)-dimethyladenosine(1519) in 16S rRNA + 4 S-adenosyl-L-homocysteine + 4 H(+). Specifically dimethylates two adjacent adenosines (A1518 and A1519) in the loop of a conserved hairpin near the 3'-end of 16S rRNA in the 30S particle. May play a critical role in biogenesis of 30S subunits. This Corynebacterium efficiens (strain DSM 44549 / YS-314 / AJ 12310 / JCM 11189 / NBRC 100395) protein is Ribosomal RNA small subunit methyltransferase A.